The primary structure comprises 98 residues: MSGEEEATVREPLDLIRLSLDERIYVKLRSDRELRGKLHAFDQHLNMILGDVEETITTVEIDDETYEEIVRTTKRTIEFLFVRGDGVILVSPPLRTAA.

At serine 2 the chain carries N-acetylserine. Residues glutamate 11 to threonine 96 enclose the Sm domain.

The protein belongs to the snRNP Sm proteins family. In terms of assembly, component of the heptameric LSM1-LSM7 complex that forms a seven-membered ring structure with a donut shape. The LSM subunits are arranged in the order LSM1, LSM2, LSM3, LSM6, LSM5, LSM7 and LSM4. Component of the heptameric LSM2-LSM8 complex that forms a seven-membered ring structure with a donut shape. The LSM subunits are arranged in the order LSM8, LSM2, LSM3, LSM6, LSM5, LSM7 and LSM4. LSM3B subunit interacts only with its two neighboring subunits, LSM2 and LSM6A or LSM6B. As to expression, expressed in roots, leaves, stems, flowers and siliques.

The protein resides in the cytoplasm. Its subcellular location is the nucleus. Its function is as follows. Component of LSM protein complexes, which are involved in RNA processing. Component of the cytoplasmic LSM1-LSM7 complex which is involved in mRNA degradation by promoting decapping and leading to accurate 5'-3' mRNA decay. The cytoplasmic LSM1-LSM7 complex regulates developmental gene expression by the decapping of specific development-related transcripts. Component of the nuclear LSM2-LSM8 complex which is involved splicing nuclear mRNAs. LSM2-LSM8 binds directly to the U6 small nuclear RNAs (snRNAs) and is essential for accurate splicing of selected development-related mRNAs through the stabilization of the spliceosomal U6 snRNA. Plays a critical role in the regulation of development-related gene expression. The chain is Sm-like protein LSM3B from Arabidopsis thaliana (Mouse-ear cress).